Reading from the N-terminus, the 122-residue chain is MKKEEIIQAIKEMTVLELNELVEACEEEFGVSAAAPVAVAGAGAAAAGAAEEKTEFDVVLTDAGSEKIKVIKAVREVTGLGLKEAKALVDGAPKTLKEAASKEDGEAIKAKLEEVGAKVELK.

It belongs to the bacterial ribosomal protein bL12 family. Homodimer. Part of the ribosomal stalk of the 50S ribosomal subunit. Forms a multimeric L10(L12)X complex, where L10 forms an elongated spine to which 2 to 4 L12 dimers bind in a sequential fashion. Binds GTP-bound translation factors.

Forms part of the ribosomal stalk which helps the ribosome interact with GTP-bound translation factors. Is thus essential for accurate translation. The polypeptide is Large ribosomal subunit protein bL12 (Clostridium botulinum (strain Langeland / NCTC 10281 / Type F)).